We begin with the raw amino-acid sequence, 184 residues long: RNA polymerase sigma factor HrpL (184 aa).

A Polymerase core binding motif is present at residues 49–62; the sequence is DILQCVFLEALRNE. Residues 151–170 constitute a DNA-binding region (H-T-H motif); it reads YQETANTLGVPIGTVRSRLS.

It belongs to the sigma-70 factor family. ECF subfamily.

Its function is as follows. Sigma factors are initiation factors that promote the attachment of RNA polymerase to specific initiation sites and are then released. This sigma factor is involved in the activation of hprD as well as other hrp loci which are involved in plant pathogenicity, hrmA and avr genes. This chain is RNA polymerase sigma factor HrpL (hrpL), found in Pseudomonas syringae pv. syringae.